The chain runs to 205 residues: Holliday junction branch migration complex subunit RuvA (205 aa).

The domain I stretch occupies residues 1–64 (MIGRLRGIVL…EDAQLLYGFN (64 aa)). Residues 65–143 (DKQERALFRE…GLNGDLFNQS (79 aa)) are domain II. A flexible linker region spans residues 144-156 (SDINLPATAKQTT). Residues 157–205 (SDADSEAEAAAALVSLGYKPQEASRMVSKIAKPGADCETLIREALRAVL) form a domain III region.

Belongs to the RuvA family. Homotetramer. Forms an RuvA(8)-RuvB(12)-Holliday junction (HJ) complex. HJ DNA is sandwiched between 2 RuvA tetramers; dsDNA enters through RuvA and exits via RuvB. An RuvB hexamer assembles on each DNA strand where it exits the tetramer. Each RuvB hexamer is contacted by two RuvA subunits (via domain III) on 2 adjacent RuvB subunits; this complex drives branch migration. In the full resolvosome a probable DNA-RuvA(4)-RuvB(12)-RuvC(2) complex forms which resolves the HJ.

It is found in the cytoplasm. The RuvA-RuvB-RuvC complex processes Holliday junction (HJ) DNA during genetic recombination and DNA repair, while the RuvA-RuvB complex plays an important role in the rescue of blocked DNA replication forks via replication fork reversal (RFR). RuvA specifically binds to HJ cruciform DNA, conferring on it an open structure. The RuvB hexamer acts as an ATP-dependent pump, pulling dsDNA into and through the RuvAB complex. HJ branch migration allows RuvC to scan DNA until it finds its consensus sequence, where it cleaves and resolves the cruciform DNA. This chain is Holliday junction branch migration complex subunit RuvA, found in Photorhabdus laumondii subsp. laumondii (strain DSM 15139 / CIP 105565 / TT01) (Photorhabdus luminescens subsp. laumondii).